We begin with the raw amino-acid sequence, 500 residues long: Archaeal-type glutamate synthase [NADPH] (500 aa).

4Fe-4S ferredoxin-type domains lie at 7-38 and 40-69; these read SKFI…YDED and DQIK…VRNN. 8 residues coordinate [4Fe-4S] cluster: Cys18, Cys21, Cys24, Cys28, Cys49, Cys52, Cys55, and Cys59.

The protein belongs to the glutamate synthase family. Requires FMN as cofactor.

The enzyme catalyses 2 L-glutamate + NADP(+) = L-glutamine + 2-oxoglutarate + NADPH + H(+). This is Archaeal-type glutamate synthase [NADPH] from Dehalococcoides mccartyi (strain ATCC BAA-2266 / KCTC 15142 / 195) (Dehalococcoides ethenogenes (strain 195)).